The primary structure comprises 69 residues: MRVLFSILGVLTLLSIVPLARSFLENQDCSKHRHCRMKCKANEYAVRYCEDWTICCRVKKKESKKKKMW.

The first 22 residues, 1-22 (MRVLFSILGVLTLLSIVPLARS), serve as a signal peptide directing secretion. 2 cysteine pairs are disulfide-bonded: cysteine 29/cysteine 56 and cysteine 35/cysteine 49.

This sequence belongs to the beta-defensin family.

It localises to the secreted. Functionally, has bactericidal activity. The chain is Beta-defensin 43 (Defb43) from Mus musculus (Mouse).